The sequence spans 118 residues: Putative cytochrome P450 family member 4F30 (118 aa).

The segment at 1 to 64 is disordered; sequence MVTPAGCLGG…GPLHILGTDG (64 aa). Residues 28-43 are compositionally biased toward polar residues; the sequence is RAGQTGQAVSGAQVSS.

This is Putative cytochrome P450 family member 4F30 (CYP4F30P) from Homo sapiens (Human).